Consider the following 157-residue polypeptide: UPF0178 protein BH1374 (157 aa).

The protein belongs to the UPF0178 family.

This chain is UPF0178 protein BH1374, found in Halalkalibacterium halodurans (strain ATCC BAA-125 / DSM 18197 / FERM 7344 / JCM 9153 / C-125) (Bacillus halodurans).